The following is an 828-amino-acid chain: Leucine--tRNA ligase (828 aa).

A 'HIGH' region motif is present at residues 42 to 52 (PYPSGTLHVGH). The short motif at 582-586 (KMSKS) is the 'KMSKS' region element. An ATP-binding site is contributed by lysine 585.

The protein belongs to the class-I aminoacyl-tRNA synthetase family.

The protein localises to the cytoplasm. The enzyme catalyses tRNA(Leu) + L-leucine + ATP = L-leucyl-tRNA(Leu) + AMP + diphosphate. In Petrotoga mobilis (strain DSM 10674 / SJ95), this protein is Leucine--tRNA ligase.